The following is a 73-amino-acid chain: DNA-directed RNA polymerase subunit epsilon (73 aa).

This sequence belongs to the RNA polymerase subunit epsilon family. In terms of assembly, RNAP is composed of a core of 2 alpha, a beta and a beta' subunit. The core is associated with a delta subunit, and at least one of epsilon or omega. When a sigma factor is associated with the core the holoenzyme is formed, which can initiate transcription.

It carries out the reaction RNA(n) + a ribonucleoside 5'-triphosphate = RNA(n+1) + diphosphate. Its function is as follows. A non-essential component of RNA polymerase (RNAP). This Lactobacillus helveticus (strain DPC 4571) protein is DNA-directed RNA polymerase subunit epsilon.